Reading from the N-terminus, the 343-residue chain is MLKTIALDAMGGDNGPKVIVPAALSILKKHPKVKLILVGKEDQLALLIPEKNRKSFGQRLEIIHASEEVGMDEPPSQALRTKKNSSMRVAINLVKEGQAHACVSAGNTGALMATARYVLKTLPGIDRPAIIAAFPTKNEREVRVLDLGANVDSTPENLYQFAVMGSILSSAAHNIRNPRIGLLNVGEEEIKGNELVKKANELFETRKTINYIGYVEGNTIFNNIADVVVCDGFVGNAVLKASEGVAQLIKQHAKEAFSEAWWTKLALLPAIPILKRLIRRVDPERYNGATFLGLNGIVVKSHGSANIKAFVCAVEEAIFQVDKNIPQLIKEEVAHILKEFENK.

It belongs to the PlsX family. In terms of assembly, homodimer. Probably interacts with PlsY.

The protein resides in the cytoplasm. It catalyses the reaction a fatty acyl-[ACP] + phosphate = an acyl phosphate + holo-[ACP]. It functions in the pathway lipid metabolism; phospholipid metabolism. Its function is as follows. Catalyzes the reversible formation of acyl-phosphate (acyl-PO(4)) from acyl-[acyl-carrier-protein] (acyl-ACP). This enzyme utilizes acyl-ACP as fatty acyl donor, but not acyl-CoA. This chain is Phosphate acyltransferase, found in Coxiella burnetii (strain RSA 331 / Henzerling II).